A 173-amino-acid chain; its full sequence is Large ribosomal subunit protein uL16 (173 aa).

It belongs to the universal ribosomal protein uL16 family.

This chain is Large ribosomal subunit protein uL16, found in Methanosarcina acetivorans (strain ATCC 35395 / DSM 2834 / JCM 12185 / C2A).